The following is a 220-amino-acid chain: Urease accessory protein UreF (220 aa).

Belongs to the UreF family. UreD, UreF and UreG form a complex that acts as a GTP-hydrolysis-dependent molecular chaperone, activating the urease apoprotein by helping to assemble the nickel containing metallocenter of UreC. The UreE protein probably delivers the nickel.

It localises to the cytoplasm. In terms of biological role, required for maturation of urease via the functional incorporation of the urease nickel metallocenter. This is Urease accessory protein UreF from Jannaschia sp. (strain CCS1).